The following is a 229-amino-acid chain: Endonuclease V (229 aa).

Positions 46 and 114 each coordinate Mg(2+).

Belongs to the endonuclease V family. It depends on Mg(2+) as a cofactor.

It localises to the cytoplasm. The enzyme catalyses Endonucleolytic cleavage at apurinic or apyrimidinic sites to products with a 5'-phosphate.. In terms of biological role, DNA repair enzyme involved in the repair of deaminated bases. Selectively cleaves double-stranded DNA at the second phosphodiester bond 3' to a deoxyinosine leaving behind the intact lesion on the nicked DNA. The polypeptide is Endonuclease V (Streptomyces avermitilis (strain ATCC 31267 / DSM 46492 / JCM 5070 / NBRC 14893 / NCIMB 12804 / NRRL 8165 / MA-4680)).